Here is a 1871-residue protein sequence, read N- to C-terminus: Callose synthase 4 (1871 aa).

Residues 1–491 (MNQPNRGQIL…FWHLFRSFDR (491 aa)) lie on the Cytoplasmic side of the membrane. Residues 492-512 (MWSFYILSLQAMIIIAWNETS) form a helical membrane-spanning segment. Topologically, residues 513 to 521 (ESGGAVFHK) are extracellular. A helical membrane pass occupies residues 522 to 542 (VLSVFITAAKLNLFQAFLDIA). Residues 543–558 (LSWKARHSMSTHVRQR) are Cytoplasmic-facing. Residues 559–579 (YIFKAVAAAVWVLLMPLTYAY) form a helical membrane-spanning segment. At 580–583 (SHTS) the chain is on the extracellular side. The helical transmembrane segment at 584–604 (IFIVAILIYLSPNMLPEMLLL) threads the bilayer. The Cytoplasmic portion of the chain corresponds to 605 to 640 (IPSIRRTLEKSDFRPVKLIMWWSQPELYIGRGMHES). Residues 641 to 661 (AWSIYKYMMFWIVLLTSKLAF) form a helical membrane-spanning segment. The Extracellular segment spans residues 662-701 (SYYVEQIKPLMGPTKEIMSVPMPGYWLPEFFPHVKNNRGV). A helical transmembrane segment spans residues 702–724 (VITLWSPVILVYFMDTQIWYAIV). The Cytoplasmic segment spans residues 725-1441 (STLVGGLYGA…FDFFRMLSCY (717 aa)). Residues 1442–1462 (FTTVGFYFCSMLTVLTVYVFL) traverse the membrane as a helical segment. Topologically, residues 1463 to 1485 (YGRLYLVLSGVEKELGNKPMMME) are extracellular. A helical transmembrane segment spans residues 1486 to 1506 (IILASQSFVQIVFLMAMPMIM). The Cytoplasmic segment spans residues 1507 to 1516 (EIGLERGFYD). A helical membrane pass occupies residues 1517-1537 (ALFDFVLMQLQLASVFFTFQL). Residues 1538–1580 (GTKFHYYCKTLLHGGAEYRGTGRGFVVFHAKFAENYRFYSRSH) are Extracellular-facing. Helical transmembrane passes span 1581–1601 (FVKA…GPTY) and 1602–1622 (IGLF…APFL). Over 1623-1675 (FNPSGFEWHEIVEDWADWKKWIEYDNGGIGVPPEKSWESWWEKDIEHLQHSGK) the chain is Extracellular. A helical transmembrane segment spans residues 1676-1696 (WGIVVEIFFALRFFIFQYGLV). Topologically, residues 1697 to 1708 (YQLSAFKNKYSS) are cytoplasmic. A helical membrane pass occupies residues 1709–1729 (LWVFGASWLLILILLLTVTVL). At 1730 to 1741 (DYARRRLGTEFQ) the chain is on the extracellular side. A helical membrane pass occupies residues 1742–1762 (LLFRIIKVSLFLAFMAIFITL). Residues 1763 to 1772 (MTCRLILPQD) are Cytoplasmic-facing. A helical membrane pass occupies residues 1773–1793 (VFLCMLALIPTGWGLLLIAQS). The Extracellular portion of the chain corresponds to 1794–1815 (CKPLIQQPGIWSWVMTLAWVYD). Residues 1816–1836 (LVMGSLLFIPIAFMAWFPFIS) form a helical membrane-spanning segment. Residues 1837–1871 (EFQTRMLFNQAFSRGLHISRILSGQRKHRSSKNKD) lie on the Cytoplasmic side of the membrane.

The protein belongs to the glycosyltransferase 48 family.

Its subcellular location is the cell membrane. It carries out the reaction [(1-&gt;3)-beta-D-glucosyl](n) + UDP-alpha-D-glucose = [(1-&gt;3)-beta-D-glucosyl](n+1) + UDP + H(+). Functionally, involved in callose synthesis at the forming cell plate during cytokinesis. During plant growth and development, callose is found as a transitory component of the cell plate in dividing cells, is a major component of pollen mother cell walls and pollen tubes, and is found as a structural component of plasmodesmatal canals. The sequence is that of Callose synthase 4 (CALS4) from Arabidopsis thaliana (Mouse-ear cress).